A 428-amino-acid polypeptide reads, in one-letter code: 3-phosphoshikimate 1-carboxyvinyltransferase (428 aa).

Positions 22, 23, and 27 each coordinate 3-phosphoshikimate. A phosphoenolpyruvate-binding site is contributed by Lys22. Phosphoenolpyruvate contacts are provided by Gly96 and Arg124. 3-phosphoshikimate-binding residues include Ser170, Ser171, Gln172, Ser198, Asp314, Asn337, and Lys341. Residue Gln172 coordinates phosphoenolpyruvate. The active-site Proton acceptor is Asp314. Residues Arg345, Arg387, and Lys412 each contribute to the phosphoenolpyruvate site.

It belongs to the EPSP synthase family. In terms of assembly, monomer.

Its subcellular location is the cytoplasm. It catalyses the reaction 3-phosphoshikimate + phosphoenolpyruvate = 5-O-(1-carboxyvinyl)-3-phosphoshikimate + phosphate. It participates in metabolic intermediate biosynthesis; chorismate biosynthesis; chorismate from D-erythrose 4-phosphate and phosphoenolpyruvate: step 6/7. In terms of biological role, catalyzes the transfer of the enolpyruvyl moiety of phosphoenolpyruvate (PEP) to the 5-hydroxyl of shikimate-3-phosphate (S3P) to produce enolpyruvyl shikimate-3-phosphate and inorganic phosphate. This is 3-phosphoshikimate 1-carboxyvinyltransferase from Photobacterium profundum (strain SS9).